A 297-amino-acid chain; its full sequence is GTP-binding protein REM 1 (297 aa).

Residues methionine 1–lysine 10 show a composition bias toward polar residues. Positions methionine 1–serine 73 are disordered. Serine 51 carries the post-translational modification Phosphoserine. The segment covering aspartate 64–serine 73 has biased composition (low complexity). GTP contacts are provided by residues glycine 87 to threonine 94 and asparagine 194 to aspartate 197. The calmodulin-binding stretch occupies residues alanine 267 to alanine 286.

This sequence belongs to the small GTPase superfamily. RGK family. As to quaternary structure, in vitro, interacts with calmodulin in a calcium-dependent manner. Interacts 14-3-3 family members including YWHAE, YWHAH, YWHAQ, YWHAZ in a phosphorylation-dependent manner. In terms of tissue distribution, high expression in cardiac muscle. Moderate expression in lung, skeletal muscle and kidney. Low levels in spleen and brain.

Promotes endothelial cell sprouting and actin cytoskeletal reorganization. May be involved in angiogenesis. May function in Ca(2+) signaling. This Mus musculus (Mouse) protein is GTP-binding protein REM 1 (Rem1).